The sequence spans 257 residues: Nickel import system ATP-binding protein NikD (257 aa).

In terms of domain architecture, ABC transporter spans 4 to 245; sequence IDIQNLTIKN…HLHPYTERLI (242 aa). 37–44 is an ATP binding site; sequence GESGAGKS.

The protein belongs to the ABC transporter superfamily. The complex is composed of two ATP-binding proteins (NikD and NikE), two transmembrane proteins (NikB and NikC) and a solute-binding protein (NikA).

The protein resides in the cell membrane. It carries out the reaction Ni(2+)(out) + ATP + H2O = Ni(2+)(in) + ADP + phosphate + H(+). Functionally, part of the ABC transporter complex NikABCDE (Opp2) involved in nickel import. Probably responsible for energy coupling to the transport system. The sequence is that of Nickel import system ATP-binding protein NikD from Staphylococcus aureus (strain MSSA476).